Consider the following 58-residue polypeptide: Small ribosomal subunit protein bS21 (58 aa).

The interval 35–58 (REHYESPSVRRKKKSEAARKRRYK) is disordered. A compositionally biased stretch (basic residues) spans 43–58 (VRRKKKSEAARKRRYK).

The protein belongs to the bacterial ribosomal protein bS21 family.

The polypeptide is Small ribosomal subunit protein bS21 (Acetivibrio thermocellus (strain ATCC 27405 / DSM 1237 / JCM 9322 / NBRC 103400 / NCIMB 10682 / NRRL B-4536 / VPI 7372) (Clostridium thermocellum)).